An 828-amino-acid polypeptide reads, in one-letter code: Phenylalanine--tRNA ligase beta subunit (828 aa).

The tRNA-binding domain maps to 44–155 (GPVDGPLTVG…GTAEPGADGA (112 aa)). A B5 domain is found at 411–486 (WSPPAIQMPA…RLEGLEVIGS (76 aa)). Asp-464, Asp-470, Glu-473, and Glu-474 together coordinate Mg(2+). The region spanning 734 to 827 (SPFPAVFQDV…AAEAVGAELR (94 aa)) is the FDX-ACB domain.

The protein belongs to the phenylalanyl-tRNA synthetase beta subunit family. Type 1 subfamily. In terms of assembly, tetramer of two alpha and two beta subunits. It depends on Mg(2+) as a cofactor.

Its subcellular location is the cytoplasm. The enzyme catalyses tRNA(Phe) + L-phenylalanine + ATP = L-phenylalanyl-tRNA(Phe) + AMP + diphosphate + H(+). In Mycolicibacterium paratuberculosis (strain ATCC BAA-968 / K-10) (Mycobacterium paratuberculosis), this protein is Phenylalanine--tRNA ligase beta subunit.